The chain runs to 562 residues: Tryptophan 2-monooxygenase (562 aa).

Residues serine 54, glutamate 74, arginine 76, arginine 82, and arginine 104 each coordinate FMN. A substrate-binding site is contributed by arginine 104.

This sequence belongs to the tryptophan 2-monooxygenase family. Requires FMN as cofactor.

The enzyme catalyses L-tryptophan + O2 = indole-3-acetamide + CO2 + H2O. It functions in the pathway plant hormone metabolism; auxin biosynthesis. The protein is Tryptophan 2-monooxygenase (iaaM) of Pantoea agglomerans pv. gypsophilae (Erwinia herbicola).